A 318-amino-acid polypeptide reads, in one-letter code: tRNA uridine(34) hydroxylase (318 aa).

One can recognise a Rhodanese domain in the interval 125 to 219 (QDPNTVVIDA…YGTSKDTEGK (95 aa)). The active-site Cysteine persulfide intermediate is the cysteine 179.

It belongs to the TrhO family.

The enzyme catalyses uridine(34) in tRNA + AH2 + O2 = 5-hydroxyuridine(34) in tRNA + A + H2O. Functionally, catalyzes oxygen-dependent 5-hydroxyuridine (ho5U) modification at position 34 in tRNAs. In Acholeplasma laidlawii (strain PG-8A), this protein is tRNA uridine(34) hydroxylase.